The primary structure comprises 73 residues: Ferredoxin-thioredoxin reductase, variable chain (73 aa).

Residues 43-46 form an interaction with ferredoxin region; that stretch reads NGKP.

This sequence belongs to the ferredoxin thioredoxin reductase alpha subunit family. Heterodimer of subunit A (variable subunit) and subunit B (catalytic subunit). Heterodimeric FTR forms a complex with ferredoxin and thioredoxin.

Its function is as follows. Variable subunit of the ferredoxin-thioredoxin reductase (FTR), which catalyzes the two-electron reduction of thioredoxins by the electrons provided by reduced ferredoxin. This Synechococcus sp. (strain ATCC 27144 / PCC 6301 / SAUG 1402/1) (Anacystis nidulans) protein is Ferredoxin-thioredoxin reductase, variable chain (ftrV).